The chain runs to 350 residues: MQVSDFHFELPDELIARYPQPERTASRLLQLNGNSGELNDGQFTDILDLVQAGDLLVFNNTRVIPARMFGMKASGGKLEVLVERVLDEHSVLAHVRCSKSPKPGTMLLLGENQEHEAEMVARHDTLFEIRFTSDKKVLDILDEIGHMPLPPYIDRPDEDADKERYQTVYNKKPGAVAAPTAGLHFDTEILEKMKAKGVEFAYVTLHVGAGTFQPVRVDNILEHHMHSEYAEVSQEVIDAINATKARGGRVVSVGTTSVRSLESAAQHALKQGTELAPFFDDTEIFIYPGYEFQVVDALVTNFHLPESTLIMLVSAFAGYENTMKAYEQAVNNKYRFFSYGDAMFITKKTA.

Belongs to the QueA family. As to quaternary structure, monomer.

The protein localises to the cytoplasm. The catalysed reaction is 7-aminomethyl-7-carbaguanosine(34) in tRNA + S-adenosyl-L-methionine = epoxyqueuosine(34) in tRNA + adenine + L-methionine + 2 H(+). The protein operates within tRNA modification; tRNA-queuosine biosynthesis. In terms of biological role, transfers and isomerizes the ribose moiety from AdoMet to the 7-aminomethyl group of 7-deazaguanine (preQ1-tRNA) to give epoxyqueuosine (oQ-tRNA). The polypeptide is S-adenosylmethionine:tRNA ribosyltransferase-isomerase (Aliivibrio fischeri (strain ATCC 700601 / ES114) (Vibrio fischeri)).